The primary structure comprises 408 residues: E3 ubiquitin-protein ligase At1g12760 (408 aa).

A disordered region spans residues 1–52 (MSTETTTGNSSLIPASSSSSSSDAIDPAPLLFNGDDNEGNNGGGGGERRSVR). A compositionally biased stretch (low complexity) spans 10–34 (SSLIPASSSSSSSDAIDPAPLLFNG). The next 2 membrane-spanning stretches (helical) occupy residues 100-120 (VVVL…AILV) and 133-153 (VWLL…CVEY). The disordered stretch occupies residues 160–195 (RTNRTTTTTPPRSRSSSSSSSSSSLEEEALGSRRNS). Over residues 163–183 (RTTTTTPPRSRSSSSSSSSSS) the composition is skewed to low complexity. 3 helical membrane passes run 219–239 (ANTM…SAGG), 254–274 (IVFL…ACVI), and 275–295 (GIAV…VADQ). An RING-type; atypical zinc finger spans residues 353-394 (CCICLSAYEDGTELRELPCGHHFHCSCVDKWLYINATCPLCK).

Its subcellular location is the membrane. It catalyses the reaction S-ubiquitinyl-[E2 ubiquitin-conjugating enzyme]-L-cysteine + [acceptor protein]-L-lysine = [E2 ubiquitin-conjugating enzyme]-L-cysteine + N(6)-ubiquitinyl-[acceptor protein]-L-lysine.. It participates in protein modification; protein ubiquitination. Its function is as follows. Mediates E2-dependent protein ubiquitination in vitro. In Arabidopsis thaliana (Mouse-ear cress), this protein is E3 ubiquitin-protein ligase At1g12760.